The primary structure comprises 247 residues: Segregation and condensation protein A (247 aa).

This sequence belongs to the ScpA family. As to quaternary structure, component of a cohesin-like complex composed of ScpA, ScpB and the Smc homodimer, in which ScpA and ScpB bind to the head domain of Smc. The presence of the three proteins is required for the association of the complex with DNA.

The protein localises to the cytoplasm. In terms of biological role, participates in chromosomal partition during cell division. May act via the formation of a condensin-like complex containing Smc and ScpB that pull DNA away from mid-cell into both cell halves. This chain is Segregation and condensation protein A, found in Bacillus cereus (strain ATCC 10987 / NRS 248).